The chain runs to 351 residues: Hydroxymethylglutaryl-CoA synthase (351 aa).

Asp-30 lines the (3S)-3-hydroxy-3-methylglutaryl-CoA pocket. Glu-82 serves as the catalytic Proton donor/acceptor. Residues Cys-114, Ser-155, Thr-203, and His-236 each coordinate (3S)-3-hydroxy-3-methylglutaryl-CoA. Cys-114 acts as the Acyl-thioester intermediate in catalysis. His-236 functions as the Proton donor/acceptor in the catalytic mechanism. Arg-241 contributes to the CoA binding site. 3 residues coordinate (3S)-3-hydroxy-3-methylglutaryl-CoA: Arg-245, Asn-268, and Ser-298.

It belongs to the thiolase-like superfamily. Archaeal HMG-CoA synthase family. As to quaternary structure, interacts with acetoacetyl-CoA thiolase that catalyzes the precedent step in the pathway and with a DUF35 protein. The acetoacetyl-CoA thiolase/HMG-CoA synthase complex channels the intermediate via a fused CoA-binding site, which allows for efficient coupling of the endergonic thiolase reaction with the exergonic HMGCS reaction.

It catalyses the reaction acetoacetyl-CoA + acetyl-CoA + H2O = (3S)-3-hydroxy-3-methylglutaryl-CoA + CoA + H(+). The protein operates within metabolic intermediate biosynthesis; (R)-mevalonate biosynthesis; (R)-mevalonate from acetyl-CoA: step 2/3. Catalyzes the condensation of acetyl-CoA with acetoacetyl-CoA to form 3-hydroxy-3-methylglutaryl-CoA (HMG-CoA). Functions in the mevalonate (MVA) pathway leading to isopentenyl diphosphate (IPP), a key precursor for the biosynthesis of isoprenoid compounds that are building blocks of archaeal membrane lipids. In Pyrobaculum neutrophilum (strain DSM 2338 / JCM 9278 / NBRC 100436 / V24Sta) (Thermoproteus neutrophilus), this protein is Hydroxymethylglutaryl-CoA synthase.